A 109-amino-acid polypeptide reads, in one-letter code: Flagellar hook-basal body complex protein FliE (109 aa).

Positions 1-38 (MQAIHNDKSLLSPFSELNTDNRTKREESGSTFKEQKGG) are disordered. Basic and acidic residues predominate over residues 19–38 (TDNRTKREESGSTFKEQKGG).

This sequence belongs to the FliE family.

The protein localises to the bacterial flagellum basal body. This chain is Flagellar hook-basal body complex protein FliE, found in Helicobacter pylori (strain P12).